The sequence spans 265 residues: Undecaprenyl-diphosphatase (265 aa).

The next 7 membrane-spanning stretches (helical) occupy residues Ser38–Trp58, Leu80–Glu100, Pro107–Ala127, Ile135–Gly155, Ala175–Tyr195, Ala213–Leu233, and Phe244–Ile264.

The protein belongs to the UppP family.

It localises to the cell inner membrane. It carries out the reaction di-trans,octa-cis-undecaprenyl diphosphate + H2O = di-trans,octa-cis-undecaprenyl phosphate + phosphate + H(+). Its function is as follows. Catalyzes the dephosphorylation of undecaprenyl diphosphate (UPP). Confers resistance to bacitracin. This Rhizobium etli (strain CIAT 652) protein is Undecaprenyl-diphosphatase.